Consider the following 106-residue polypeptide: MLVLTTETIPGKGIKEVKGLVKGSTVRCKNIGKDIASSFKNLVGGEMNSYTEMLTEARQIAIGRMVDEAESLGANAIIGMRLVSSSLAAGAAEMVAYGTAVIYEDA.

It belongs to the UPF0145 family.

This is UPF0145 protein CPF_0876 from Clostridium perfringens (strain ATCC 13124 / DSM 756 / JCM 1290 / NCIMB 6125 / NCTC 8237 / Type A).